We begin with the raw amino-acid sequence, 209 residues long: Bacteriorhodopsin (209 aa).

The chain crosses the membrane as a helical span at residues 1–17; that stretch reads LWLGTAGMFLGMLYFIA. Residues 18-31 lie on the Cytoplasmic side of the membrane; that stretch reads RGWGETDGRRQKFY. A helical transmembrane segment spans residues 32 to 50; the sequence is IATILITAIAFVNYLAMAL. Residues 51–66 lie on the Extracellular side of the membrane; the sequence is GFGLTFIEFGGEQHPI. Residues 67 to 84 traverse the membrane as a helical segment; it reads YWARYTDWLFTTPLLLYD. Residues 85 to 95 lie on the Cytoplasmic side of the membrane; it reads LGLLAGADRNT. Residues 96-115 traverse the membrane as a helical segment; sequence IYSLVSLDVLMIGTGVVATL. Residues 116-128 are Extracellular-facing; it reads SAGSGVLSAGAER. The helical transmembrane segment at 129–148 threads the bilayer; the sequence is LVWWGISTAFLLVLLYFLFS. Residues 149 to 166 lie on the Cytoplasmic side of the membrane; it reads SLSGRVANLPSDTRSTFK. Residues 167–185 traverse the membrane as a helical segment; it reads TLRNLVTVVWLVYPVWWLV. The Extracellular portion of the chain corresponds to 186 to 197; that stretch reads GSEGLGLVGIGI. Residues 198-209 form a helical membrane-spanning segment; sequence ETAGFMVIDLVA.

The protein belongs to the archaeal/bacterial/fungal opsin family.

It localises to the cell membrane. In terms of biological role, light-driven proton pump. The protein is Bacteriorhodopsin (bop) of Halobacterium halobium (strain shark).